A 1397-amino-acid chain; its full sequence is DNA-directed RNA polymerase subunit beta' (1397 aa).

4 residues coordinate Zn(2+): C75, C77, C90, and C93. Mg(2+) contacts are provided by D465, D467, and D469. Positions 819, 893, 900, and 903 each coordinate Zn(2+).

This sequence belongs to the RNA polymerase beta' chain family. As to quaternary structure, the RNAP catalytic core consists of 2 alpha, 1 beta, 1 beta' and 1 omega subunit. When a sigma factor is associated with the core the holoenzyme is formed, which can initiate transcription. Mg(2+) serves as cofactor. Zn(2+) is required as a cofactor.

It catalyses the reaction RNA(n) + a ribonucleoside 5'-triphosphate = RNA(n+1) + diphosphate. Its function is as follows. DNA-dependent RNA polymerase catalyzes the transcription of DNA into RNA using the four ribonucleoside triphosphates as substrates. This is DNA-directed RNA polymerase subunit beta' from Acinetobacter baumannii (strain SDF).